Reading from the N-terminus, the 380-residue chain is Homoserine O-succinyltransferase (380 aa).

The 312-residue stretch at 51-362 (NAVLICHALS…SKHGHDAFLL (312 aa)) folds into the AB hydrolase-1 domain. Ser-157 serves as the catalytic Nucleophile. Position 227 (Arg-227) interacts with substrate. Catalysis depends on residues Asp-324 and His-357. Residue Asp-358 coordinates substrate.

Belongs to the AB hydrolase superfamily. MetX family. As to quaternary structure, homodimer.

The protein localises to the cytoplasm. It carries out the reaction L-homoserine + succinyl-CoA = O-succinyl-L-homoserine + CoA. Its pathway is amino-acid biosynthesis; L-methionine biosynthesis via de novo pathway; O-succinyl-L-homoserine from L-homoserine: step 1/1. Functionally, transfers a succinyl group from succinyl-CoA to L-homoserine, forming succinyl-L-homoserine. This chain is Homoserine O-succinyltransferase, found in Cellvibrio japonicus (strain Ueda107) (Pseudomonas fluorescens subsp. cellulosa).